Reading from the N-terminus, the 409-residue chain is MEEYLNPINIFSEIGRLKKVLLHRPGEELENLTPFIMKNFLFDDIPYLEVARQEHEVFASILKNNLVEIEYIEDLVSEVLVSSVALQNKFISQFILEAEIKTDFTINLLKDYFSSLTIDNMISKMISGVVTEELKNYTSSLDDLVNGANLFIIDPMPNVLFTRDPFASIGNGVTINKMFTKVRQRETIFAEYIFKYHPVYKENVPIWLNRWEEASLEGGDELVLNKGLLVIGISERTEAKSVEKLAISLFKNKTSFDTILAFQIPKNRSYMHLDTVFTQIDYSVFTSFTSDDMYFSIYVLTYNPSSSKIHIKKEKARIKDVLSFYLGRKIDIIKCAGGDLIHGAREQWNDGANVLAIAPGEIIAYSRNHVTNKLFEENGIKVHRIPSSELSRGRGGPRCMSMPLIREDI.

Cys-399 (amidino-cysteine intermediate) is an active-site residue.

Belongs to the arginine deiminase family.

The protein localises to the cytoplasm. It carries out the reaction L-arginine + H2O = L-citrulline + NH4(+). It participates in amino-acid degradation; L-arginine degradation via ADI pathway; carbamoyl phosphate from L-arginine: step 1/2. The chain is Arginine deiminase from Borreliella afzelii (strain PKo) (Borrelia afzelii).